The following is a 219-amino-acid chain: 16S rRNA (adenine(1408)-N(1))-methyltransferase (219 aa).

S-adenosyl-L-methionine-binding positions include Gly-32, Asn-38, Asp-55, 87-88 (AE), 104-109 (LFPWGT), and 195-197 (SLW).

The protein belongs to the methyltransferase superfamily. Kanamycin-apramycin resistance family.

It carries out the reaction adenosine(1408) in 16S rRNA + S-adenosyl-L-methionine = N(1)-methyladenosine(1408) in 16S rRNA + S-adenosyl-L-homocysteine + H(+). In terms of biological role, specifically methylates the N(1) position of adenine 1408 in 16S rRNA. Confers resistance to various aminoglycosides, including kanamycin, neomycin, apramycin, ribostamycin and gentamicin. Methylates only fully assembled 30S subunits. In Escherichia coli, this protein is 16S rRNA (adenine(1408)-N(1))-methyltransferase (npmA).